An 87-amino-acid polypeptide reads, in one-letter code: Small ribosomal subunit protein bS18 (87 aa).

Over residues 1–10 (MAGKSSGDRR) the composition is skewed to basic and acidic residues. Residues 1-23 (MAGKSSGDRRKLLRGAKVGKNAA) are disordered.

The protein belongs to the bacterial ribosomal protein bS18 family. Part of the 30S ribosomal subunit. Forms a tight heterodimer with protein bS6.

In terms of biological role, binds as a heterodimer with protein bS6 to the central domain of the 16S rRNA, where it helps stabilize the platform of the 30S subunit. This chain is Small ribosomal subunit protein bS18, found in Clavibacter sepedonicus (Clavibacter michiganensis subsp. sepedonicus).